Reading from the N-terminus, the 764-residue chain is Molybdenum cofactor sulfurase 1 (764 aa).

N6-(pyridoxal phosphate)lysine is present on Lys-228. Cys-394 is a catalytic residue. The 156-residue stretch at 607 to 762 (LRLLKQSDEE…LYCNSVVEGL (156 aa)) folds into the MOSC domain.

It belongs to the class-V pyridoxal-phosphate-dependent aminotransferase family. MOCOS subfamily. Pyridoxal 5'-phosphate is required as a cofactor.

It carries out the reaction Mo-molybdopterin + L-cysteine + AH2 = thio-Mo-molybdopterin + L-alanine + A + H2O. Functionally, sulfurates the molybdenum cofactor. Sulfation of molybdenum is essential for xanthine dehydrogenase (XDH) and aldehyde oxidase (ADO) enzymes in which molybdenum cofactor is liganded by 1 oxygen and 1 sulfur atom in active form. The polypeptide is Molybdenum cofactor sulfurase 1 (Aedes aegypti (Yellowfever mosquito)).